The chain runs to 71 residues: Brevinin-1SN2 (71 aa).

An N-terminal signal peptide occupies residues 1–22; it reads MFTMKKSLLLIFFLGTINLSLC. Positions 23–45 are cleaved as a propeptide — removed in mature form; it reads EEERNADEDEKRDGDDESDVEVQ. A disulfide bond links cysteine 65 and cysteine 71.

Belongs to the frog skin active peptide (FSAP) family. Brevinin subfamily. As to expression, expressed by the skin glands.

Its subcellular location is the secreted. Functionally, antimicrobial peptide. Active against a variety of Gram-negative and Gram-positive bacterial strains. Active against fungus C.glabrata 090902 and C.albicans ATCC 10231. Shows hemolytic activity against human erythrocytes. This chain is Brevinin-1SN2, found in Sylvirana spinulosa (Fine-spined frog).